The sequence spans 241 residues: DNA repair protein RecO (241 aa).

This sequence belongs to the RecO family.

Involved in DNA repair and RecF pathway recombination. The protein is DNA repair protein RecO of Yersinia pseudotuberculosis serotype O:1b (strain IP 31758).